A 206-amino-acid chain; its full sequence is Sec-independent protein translocase protein TatB (206 aa).

Residues 1–21 (MFDIGWTELLVIAVVLIVVVG) form a helical membrane-spanning segment. Residues 104–206 (ENKTEVPSAA…VQTKKKKDEA (103 aa)) are disordered. The span at 110-124 (PSAAMSAPTPSMSLP) shows a compositional bias: low complexity. Over residues 125–138 (ETPPVVPTPAPAPE) the composition is skewed to pro residues. Composition is skewed to low complexity over residues 139 to 151 (PAAVAAETVAAKP) and 187 to 196 (ARKPAAPKTP).

It belongs to the TatB family. The Tat system comprises two distinct complexes: a TatABC complex, containing multiple copies of TatA, TatB and TatC subunits, and a separate TatA complex, containing only TatA subunits. Substrates initially bind to the TatABC complex, which probably triggers association of the separate TatA complex to form the active translocon.

Its subcellular location is the cell inner membrane. Its function is as follows. Part of the twin-arginine translocation (Tat) system that transports large folded proteins containing a characteristic twin-arginine motif in their signal peptide across membranes. Together with TatC, TatB is part of a receptor directly interacting with Tat signal peptides. TatB may form an oligomeric binding site that transiently accommodates folded Tat precursor proteins before their translocation. The sequence is that of Sec-independent protein translocase protein TatB from Rhizobium etli (strain ATCC 51251 / DSM 11541 / JCM 21823 / NBRC 15573 / CFN 42).